A 466-amino-acid polypeptide reads, in one-letter code: Ras GTPase-activating protein-binding protein 1 (466 aa).

Residues 11 to 133 (VGREFVRQYY…FYVHNDIFRY (123 aa)) form the NTF2 domain. Residues K36, K50, K59, K64, K76, and K123 each participate in a glycyl lysine isopeptide (Lys-Gly) (interchain with G-Cter in ubiquitin) cross-link. Residues 142-225 (VTEPQEESEE…EPVLEETVPE (84 aa)) are acidic disordered region. At T143 the chain carries Phosphothreonine. Disordered regions lie at residues 144–172 (EPQE…DSGT) and 184–243 (EEHL…QTVQ). Acidic residues-rich tracts occupy residues 145–157 (PQEE…EEPE) and 185–206 (EHLE…EQEP). Residue S149 is modified to Phosphoserine. S231, S232, S250, and S253 each carry phosphoserine. The segment at 255-329 (TSKNLPPSGA…REAGEQGDIE (75 aa)) is disordered. 2 stretches are compositionally biased toward basic and acidic residues: residues 297-307 (PQRDQRVREQR) and 318-329 (PIREAGEQGDIE). The RRM domain maps to 340–415 (HQLFIGNLPH…VRLNVEEKKT (76 aa)). Glycyl lysine isopeptide (Lys-Gly) (interchain with G-Cter in ubiquitin) cross-links involve residues K353 and K357. Phosphoserine is present on S373. A Glycyl lysine isopeptide (Lys-Gly) (interchain with G-Cter in ubiquitin) cross-link involves residue K376. K376 is subject to N6-acetyllysine; alternate. A Glycyl lysine isopeptide (Lys-Gly) (interchain with G-Cter in SUMO2); alternate cross-link involves residue K376. K393 participates in a covalent cross-link: Glycyl lysine isopeptide (Lys-Gly) (interchain with G-Cter in ubiquitin); alternate. The RG-rich region stretch occupies residues 410–466 (VEEKKTRAAREGDRRDNRLRGPGGPRGGLGGGMRGPPRGGMVQKPGFGVGRGLAPRQ). Residues 413 to 428 (KKTRAAREGDRRDNRL) are compositionally biased toward basic and acidic residues. A disordered region spans residues 413–466 (KKTRAAREGDRRDNRLRGPGGPRGGLGGGMRGPPRGGMVQKPGFGVGRGLAPRQ). An Asymmetric dimethylarginine modification is found at R429. The segment covering 430–447 (GPGGPRGGLGGGMRGPPR) has biased composition (gly residues). Position 435 is an asymmetric dimethylarginine; alternate (R435). 4 positions are modified to omega-N-methylarginine; alternate: R435, R447, R460, and R465. R460 is subject to Dimethylated arginine; alternate.

In terms of assembly, homodimer and oligomer. Component of a TAU mRNP complex, at least composed of IGF2BP1, ELAVL4 and G3BP1. Binds to the SH3 domain of Ras GTPase-activating protein (RASA1) in proliferating cells. No interaction in quiescent cells. Interacts (via NTF2 domain) with USP10; inhibiting stress granule formation by lowering G3BP1 valence. Interacts (via NTF2 domain) with CAPRIN1; promoting stress granule formation by lowering the saturation-concentration of G3BP1. Interacts (via NTF2 domain) with UBAP2L; promoting stress granule formation. Associates (via RG-rich region) with 40S ribosome subunits. Interacts with RPTOR and SPAG5; this complex is increased by oxidative stress. Interacts with ATXN2L. Interacts with STYXL1. Interacts with CGAS (via N-terminus); this interaction promotes the DNA-binding and activation of CGAS. Interacts (via C-terminus) with RIGI. Interacts with PABPC1. Interacts with QKI (isoforms QKI6 and QKI7); directing N(7)-methylguanine-containing mRNAs to stress granules. Mg(2+) is required as a cofactor. In terms of processing, phosphorylation of the acidic disordered region regulates stress granule assembly. RASA1-dependent phosphorylation of Ser-149 induces a conformational change that prevents self-association. Dephosphorylation after HRAS activation is required for stress granule assembly. Ser-149 phosphorylation induces partial nuclear localization. Post-translationally, arg-435 is dimethylated, probably to asymmetric dimethylarginine. Ubiquitinated by TRIM21 via 'Lys-63'-linked polyubiquitination in the NTF2 domain in response to heat shock, leading to stress granule disassembly: ubiquitination promotes interaction with the FAF2 adapter, followed by interaction with VCP, which extracts G3BP1 from stress granules, leading to stress granule disassembly. In case of prolonged stress, ubiquitination by TRIM21 leads to autophagy-dependent degradation of G3BP1 via recruitment of ubiquitinated G3BP1 by SQSTM1 and/or CALCOCO2 to autophagosomes.

Its subcellular location is the cytoplasm. The protein localises to the cytosol. The protein resides in the perikaryon. It is found in the stress granule. It localises to the nucleus. The enzyme catalyses ATP + H2O = ADP + phosphate + H(+). Under physiological conditions, G3BP1 adopts a compact state that is stabilized by intramolecular interactions between the RG-rich and the acidic regions that inhibit phase separation. Upon stress, polysomes disassemble and mRNAs are released in an unfolded protein-free state. Binding of unfolded mRNA to G3BP1 outcompetes the intramolecular interactions and RNA-bound G3BP1 adopts an expanded conformation in which the RG-rich region becomes exposed to engage in protein-protein and protein-RNA interactions, allowing physical cross-linking of RNA molecules to form protein-RNA condensates, leading to liquid-liquid phase separation (LLPS). Protein involved in various processes, such as stress granule formation and innate immunity. Plays an essential role in stress granule formation. Stress granules are membraneless compartments that store mRNAs and proteins, such as stalled translation pre-initiation complexes, in response to stress. Promotes formation of stress granules phase-separated membraneless compartment by undergoing liquid-liquid phase separation (LLPS) upon unfolded RNA-binding: functions as a molecular switch that triggers RNA-dependent LLPS in response to a rise in intracellular free RNA concentrations. Also acts as an ATP- and magnesium-dependent helicase: unwinds DNA/DNA, RNA/DNA, and RNA/RNA substrates with comparable efficiency. Acts unidirectionally by moving in the 5' to 3' direction along the bound single-stranded DNA. Unwinds preferentially partial DNA and RNA duplexes having a 17 bp annealed portion and either a hanging 3' tail or hanging tails at both 5'- and 3'-ends. Plays an essential role in innate immunity by promoting CGAS and RIGI activity. Participates in the DNA-triggered cGAS/STING pathway by promoting the DNA binding and activation of CGAS. Triggers the condensation of cGAS, a process probably linked to the formation of membrane-less organelles. Also enhances RIGI-induced type I interferon production probably by helping RIGI at sensing pathogenic RNA. May also act as a phosphorylation-dependent sequence-specific endoribonuclease in vitro: Cleaves exclusively between cytosine and adenine and cleaves MYC mRNA preferentially at the 3'-UTR. In Pongo abelii (Sumatran orangutan), this protein is Ras GTPase-activating protein-binding protein 1 (G3BP1).